Consider the following 291-residue polypeptide: ATP synthase gamma chain (291 aa).

This sequence belongs to the ATPase gamma chain family. In terms of assembly, F-type ATPases have 2 components, CF(1) - the catalytic core - and CF(0) - the membrane proton channel. CF(1) has five subunits: alpha(3), beta(3), gamma(1), delta(1), epsilon(1). CF(0) has three main subunits: a, b and c.

The protein resides in the cell inner membrane. In terms of biological role, produces ATP from ADP in the presence of a proton gradient across the membrane. The gamma chain is believed to be important in regulating ATPase activity and the flow of protons through the CF(0) complex. The protein is ATP synthase gamma chain of Ruegeria pomeroyi (strain ATCC 700808 / DSM 15171 / DSS-3) (Silicibacter pomeroyi).